A 351-amino-acid polypeptide reads, in one-letter code: SLAM family member 6 (351 aa).

The N-terminal stretch at 1–30 (MAVSRAPAPDSACQRMVWLFPLVFCLGSGS) is a signal peptide. Residues 31–239 (EVSQSSSDPQ…KGVLTNPPWN (209 aa)) are Extracellular-facing. An Ig-like V-type domain is found at 36–130 (SSDPQLMNGV…YTAQITTKDS (95 aa)). Residues Asn82, Asn101, Asn112, Asn152, Asn159, Asn172, Asn186, Asn193, and Asn218 are each glycosylated (N-linked (GlcNAc...) asparagine). The region spanning 147–210 (NLETTNYTLL…RNSGDQTYVC (64 aa)) is the Ig-like C2-type domain. Cystine bridges form between Cys162-Cys229 and Cys168-Cys210. A helical transmembrane segment spans residues 240 to 262 (AVWFMTTISIISAVILIFVCWSI). The Cytoplasmic portion of the chain corresponds to 263–351 (HVWKRRGSLP…KVNTLINYNS (89 aa)). The segment at 272-295 (PLTSQHPESSQSTDGPGSPGNTVY) is disordered. 2 consecutive short sequence motifs (ITSM) follow at residues 293 to 298 (TVYAQV) and 317 to 322 (TIYSIV). Position 319 is a phosphotyrosine (Tyr319).

As to quaternary structure, homodimer. Interacts with PTN6 and, upon phosphorylation, with PTN11 and SH2D1A/SAP. Phosphorylated. Expressed on hematopoietic cells. Isoform 3 is expressed in thymocytes and B lymphocytes of C57Bl/6 strain.

It is found in the cell membrane. In terms of biological role, self-ligand receptor of the signaling lymphocytic activation molecule (SLAM) family. SLAM receptors triggered by homo- or heterotypic cell-cell interactions are modulating the activation and differentiation of a wide variety of immune cells and thus are involved in the regulation and interconnection of both innate and adaptive immune response. Activities are controlled by presence or absence of small cytoplasmic adapter proteins, SH2D1A/SAP and/or SH2D1B/EAT-2. Triggers cytolytic activity only in natural killer cells (NK) expressing high surface densities of natural cytotoxicity receptors. Positive signaling in NK cells implicates phosphorylation of VAV1. NK cell activation seems to depend on SH2D1B and not on SH2D1A. In conjunction with SLAMF1 controls the transition between positive selection and the subsequent expansion and differentiation of the thymocytic natural killer T (NKT) cell lineage. Promotes T cell differentiation into a helper T-cell Th17 phenotype leading to increased IL-17 secretion; the costimulatory activity requires SH2D1A. Promotes recruitment of RORC to the IL-17 promoter. In conjunction with SLAMF1 and CD84/SLAMF5 may be a negative regulator of the humoral immune response. In the absence of SH2D1A/SAP can transmit negative signals to CD4(+) T-cells and NKT cells. Negatively regulates germinal center formation by inhibiting T-cell:B-cell adhesion; the function probably implicates increased association with PTPN6/SHP-1 via ITSMs in absence of SH2D1A/SAP. However, reported to mediated T-cell adhesion, to participate in stable T-cell:B-cell interactions and to be involved in maintaining B-cell tolerance in germinal centers and in preventing autoimmunity. Involved in regulation of autoimmunity. Isoform 3 may be suppressor of pathogenic T-cell proliferation. The polypeptide is SLAM family member 6 (Slamf6) (Mus musculus (Mouse)).